A 239-amino-acid chain; its full sequence is Yolk ferritin (239 aa).

The signal sequence occupies residues 1–18 (MNSVLFLTLAVCSSLAYG). The region spanning 27–217 (QNYKENINQL…HAITRLRSFE (191 aa)) is the Ferritin-like diiron domain. Residues Glu44 and Glu79 each contribute to the Fe cation site. Positions 105 to 146 (KDACETVMKFVTSDTSGLEEFRDRRMCICGFVATKTINDNCG) are insertion; not present in other ferritins. Residues Glu165 and Gln199 each contribute to the Fe cation site.

This sequence belongs to the ferritin family. Oligomer of 12 or 24 subunits. The functional molecule is roughly spherical and contains a central cavity into which the polymeric ferric iron core is deposited. In terms of tissue distribution, midgut gland and bloodstream.

It is found in the secreted. It carries out the reaction 4 Fe(2+) + O2 + 4 H(+) = 4 Fe(3+) + 2 H2O. Functionally, stores iron in a soluble, non-toxic, readily available form. Important for iron homeostasis. Has ferroxidase activity. Iron is taken up in the ferrous form and deposited as ferric hydroxides after oxidation. The sequence is that of Yolk ferritin from Lymnaea stagnalis (Great pond snail).